A 157-amino-acid chain; its full sequence is Small ribosomal subunit protein uS7 (157 aa).

It belongs to the universal ribosomal protein uS7 family. In terms of assembly, part of the 30S ribosomal subunit. Contacts proteins S9 and S11.

In terms of biological role, one of the primary rRNA binding proteins, it binds directly to 16S rRNA where it nucleates assembly of the head domain of the 30S subunit. Is located at the subunit interface close to the decoding center, probably blocks exit of the E-site tRNA. The chain is Small ribosomal subunit protein uS7 from Polaromonas naphthalenivorans (strain CJ2).